We begin with the raw amino-acid sequence, 729 residues long: Fatty acid oxidation complex subunit alpha (729 aa).

Residues 1-189 are enoyl-CoA hydratase/isomerase; it reads MLYQGETLQL…KVGLVDAVVA (189 aa). Asp296 provides a ligand contact to substrate. Residues 311 to 729 form a 3-hydroxyacyl-CoA dehydrogenase region; that stretch reads EAPKQAAVLG…LSDVSTGQPA (419 aa). NAD(+) is bound by residues Met324, Asp343, 400–402, Lys407, and Ser429; that span reads VVE. Residue His450 is the For 3-hydroxyacyl-CoA dehydrogenase activity of the active site. Asn453 contributes to the NAD(+) binding site. Residues Asn500 and Tyr660 each coordinate substrate.

This sequence in the N-terminal section; belongs to the enoyl-CoA hydratase/isomerase family. It in the C-terminal section; belongs to the 3-hydroxyacyl-CoA dehydrogenase family. Heterotetramer of two alpha chains (FadB) and two beta chains (FadA).

It catalyses the reaction a (3S)-3-hydroxyacyl-CoA + NAD(+) = a 3-oxoacyl-CoA + NADH + H(+). It carries out the reaction a (3S)-3-hydroxyacyl-CoA = a (2E)-enoyl-CoA + H2O. The enzyme catalyses a 4-saturated-(3S)-3-hydroxyacyl-CoA = a (3E)-enoyl-CoA + H2O. The catalysed reaction is (3S)-3-hydroxybutanoyl-CoA = (3R)-3-hydroxybutanoyl-CoA. It catalyses the reaction a (3Z)-enoyl-CoA = a 4-saturated (2E)-enoyl-CoA. It carries out the reaction a (3E)-enoyl-CoA = a 4-saturated (2E)-enoyl-CoA. It participates in lipid metabolism; fatty acid beta-oxidation. Functionally, involved in the aerobic and anaerobic degradation of long-chain fatty acids via beta-oxidation cycle. Catalyzes the formation of 3-oxoacyl-CoA from enoyl-CoA via L-3-hydroxyacyl-CoA. It can also use D-3-hydroxyacyl-CoA and cis-3-enoyl-CoA as substrate. In Serratia proteamaculans (strain 568), this protein is Fatty acid oxidation complex subunit alpha.